Consider the following 296-residue polypeptide: Polyamine aminopropyltransferase (296 aa).

Residues 5–238 (ELWYETLHAN…GIMTFAWATQ (234 aa)) form the PABS domain. Gln-33 lines the S-methyl-5'-thioadenosine pocket. Spermidine contacts are provided by His-64 and Asp-88. S-methyl-5'-thioadenosine-binding positions include Glu-108 and 140 to 141 (DG). The active-site Proton acceptor is the Asp-158. 158 to 161 (DCTD) serves as a coordination point for spermidine. Residue Pro-165 coordinates S-methyl-5'-thioadenosine.

The protein belongs to the spermidine/spermine synthase family. Homodimer or homotetramer.

It localises to the cytoplasm. The catalysed reaction is S-adenosyl 3-(methylsulfanyl)propylamine + putrescine = S-methyl-5'-thioadenosine + spermidine + H(+). The protein operates within amine and polyamine biosynthesis; spermidine biosynthesis; spermidine from putrescine: step 1/1. In terms of biological role, catalyzes the irreversible transfer of a propylamine group from the amino donor S-adenosylmethioninamine (decarboxy-AdoMet) to putrescine (1,4-diaminobutane) to yield spermidine. The chain is Polyamine aminopropyltransferase from Yersinia pseudotuberculosis serotype O:3 (strain YPIII).